Reading from the N-terminus, the 292-residue chain is tRNA dimethylallyltransferase (292 aa).

5–12 is an ATP binding site; the sequence is APTGAGKT. 7-12 contacts substrate; the sequence is TGAGKT. An interaction with substrate tRNA region spans residues 29-32; it reads DSRQ.

Belongs to the IPP transferase family. In terms of assembly, monomer. The cofactor is Mg(2+).

It catalyses the reaction adenosine(37) in tRNA + dimethylallyl diphosphate = N(6)-dimethylallyladenosine(37) in tRNA + diphosphate. Its function is as follows. Catalyzes the transfer of a dimethylallyl group onto the adenine at position 37 in tRNAs that read codons beginning with uridine, leading to the formation of N6-(dimethylallyl)adenosine (i(6)A). The chain is tRNA dimethylallyltransferase from Leptospira borgpetersenii serovar Hardjo-bovis (strain JB197).